Consider the following 572-residue polypeptide: Formate--tetrahydrofolate ligase (572 aa).

Residue 81–88 (TPAGEGKT) coordinates ATP.

This sequence belongs to the formate--tetrahydrofolate ligase family.

It catalyses the reaction (6S)-5,6,7,8-tetrahydrofolate + formate + ATP = (6R)-10-formyltetrahydrofolate + ADP + phosphate. Its pathway is one-carbon metabolism; tetrahydrofolate interconversion. This chain is Formate--tetrahydrofolate ligase, found in Granulibacter bethesdensis (strain ATCC BAA-1260 / CGDNIH1).